The sequence spans 87 residues: DNA-directed RNA polymerase subunit omega (87 aa).

It belongs to the RNA polymerase subunit omega family. In terms of assembly, the RNAP catalytic core consists of 2 alpha, 1 beta, 1 beta' and 1 omega subunit. When a sigma factor is associated with the core the holoenzyme is formed, which can initiate transcription.

It carries out the reaction RNA(n) + a ribonucleoside 5'-triphosphate = RNA(n+1) + diphosphate. In terms of biological role, promotes RNA polymerase assembly. Latches the N- and C-terminal regions of the beta' subunit thereby facilitating its interaction with the beta and alpha subunits. The polypeptide is DNA-directed RNA polymerase subunit omega (Pseudomonas fluorescens (strain Pf0-1)).